Reading from the N-terminus, the 345-residue chain is S-adenosylmethionine:tRNA ribosyltransferase-isomerase (345 aa).

Belongs to the QueA family. Monomer.

The protein localises to the cytoplasm. It catalyses the reaction 7-aminomethyl-7-carbaguanosine(34) in tRNA + S-adenosyl-L-methionine = epoxyqueuosine(34) in tRNA + adenine + L-methionine + 2 H(+). It functions in the pathway tRNA modification; tRNA-queuosine biosynthesis. In terms of biological role, transfers and isomerizes the ribose moiety from AdoMet to the 7-aminomethyl group of 7-deazaguanine (preQ1-tRNA) to give epoxyqueuosine (oQ-tRNA). The polypeptide is S-adenosylmethionine:tRNA ribosyltransferase-isomerase (Alkalilimnicola ehrlichii (strain ATCC BAA-1101 / DSM 17681 / MLHE-1)).